The sequence spans 319 residues: ATP-dependent 6-phosphofructokinase (319 aa).

Gly11 serves as a coordination point for ATP. Residue Arg21–Arg25 participates in ADP binding. Residues Arg72–Cys73 and Gly102–Ser105 each bind ATP. Asp103 is a Mg(2+) binding site. Substrate is bound at residue Thr125–Asp127. Asp127 functions as the Proton acceptor in the catalytic mechanism. Arg154 is a binding site for ADP. Residues Arg162 and Met169–Arg171 contribute to the substrate site. ADP is bound by residues Gly185–Glu187, Arg211, and Lys213–His215. Residues Glu222, Arg243, and His249 to Arg252 contribute to the substrate site.

It belongs to the phosphofructokinase type A (PFKA) family. ATP-dependent PFK group I subfamily. Prokaryotic clade 'B1' sub-subfamily. Homotetramer. Requires Mg(2+) as cofactor.

It localises to the cytoplasm. The catalysed reaction is beta-D-fructose 6-phosphate + ATP = beta-D-fructose 1,6-bisphosphate + ADP + H(+). It participates in carbohydrate degradation; glycolysis; D-glyceraldehyde 3-phosphate and glycerone phosphate from D-glucose: step 3/4. With respect to regulation, allosterically activated by ADP and other diphosphonucleosides, and allosterically inhibited by phosphoenolpyruvate. Catalyzes the phosphorylation of D-fructose 6-phosphate to fructose 1,6-bisphosphate by ATP, the first committing step of glycolysis. The protein is ATP-dependent 6-phosphofructokinase of Bacillus cytotoxicus (strain DSM 22905 / CIP 110041 / 391-98 / NVH 391-98).